Consider the following 287-residue polypeptide: ADP-dependent (S)-NAD(P)H-hydrate dehydratase (287 aa).

Residues 7-283 (TTALVKKFIP…PEISTVMKPF (277 aa)) enclose the YjeF C-terminal domain. The (6S)-NADPHX site is built by alanine 42 and histidine 159. Residues 196-200 (KGSTD) and glycine 224 each bind AMP. Aspartate 225 is a binding site for (6S)-NADPHX.

This sequence belongs to the NnrD/CARKD family. In terms of assembly, homotetramer. It depends on Mg(2+) as a cofactor.

The catalysed reaction is (6S)-NADHX + ADP = AMP + phosphate + NADH + H(+). The enzyme catalyses (6S)-NADPHX + ADP = AMP + phosphate + NADPH + H(+). Its function is as follows. Catalyzes the dehydration of the S-form of NAD(P)HX at the expense of ADP, which is converted to AMP. Together with NAD(P)HX epimerase, which catalyzes the epimerization of the S- and R-forms, the enzyme allows the repair of both epimers of NAD(P)HX, a damaged form of NAD(P)H that is a result of enzymatic or heat-dependent hydration. This is ADP-dependent (S)-NAD(P)H-hydrate dehydratase from Nitrosopumilus maritimus (strain SCM1).